The primary structure comprises 535 residues: Lecithin-cholesterol acyltransferase-like 4 (535 aa).

Serine 2 carries the post-translational modification N-acetylserine. The active-site Acyl-ester intermediate is serine 182. Active-site charge relay system residues include aspartate 391 and histidine 416. Residues 488 to 505 (STVNSISVSQPGDDQNPQ) are compositionally biased toward polar residues. Positions 488–507 (STVNSISVSQPGDDQNPQAE) are disordered.

The protein belongs to the AB hydrolase superfamily. Lipase family.

The chain is Lecithin-cholesterol acyltransferase-like 4 (LCAT4) from Arabidopsis thaliana (Mouse-ear cress).